The primary structure comprises 456 residues: Sensitive to high expression protein 9, mitochondrial (456 aa).

The N-terminal 30 residues, 1 to 30 (MLRYYGATRNLPLVFSINKLMLRASSFTRP), are a transit peptide targeting the mitochondrion. The Mitochondrial matrix portion of the chain corresponds to 31 to 296 (FHYSSYSLQN…WSDKIRRTST (266 aa)). Coiled coils occupy residues 71 to 128 (QHLK…KDEL) and 178 to 277 (IQKL…YRAI). A helical transmembrane segment spans residues 297–317 (WGTFILMGMNIFLFIVLQLLL). The Mitochondrial intermembrane segment spans residues 318 to 435 (EPWKRKRLVG…KLDAPLVFDT (118 aa)). A helical transmembrane segment spans residues 436–456 (LEFYLYSISLVSMTILVSGLI).

Belongs to the SHE9 family. Homooligomer. Participates in a complex of about 300 kDa.

The protein resides in the mitochondrion inner membrane. Its function is as follows. Required for the maintenance of the structure of the mitochondrial inner membrane. Involved in mitochondrial morphology. Causes growth arrest when highly overexpressed. The chain is Sensitive to high expression protein 9, mitochondrial (SHE9) from Saccharomyces cerevisiae (strain ATCC 204508 / S288c) (Baker's yeast).